The chain runs to 181 residues: ATP synthase subunit delta (181 aa).

This sequence belongs to the ATPase delta chain family. F-type ATPases have 2 components, F(1) - the catalytic core - and F(0) - the membrane proton channel. F(1) has five subunits: alpha(3), beta(3), gamma(1), delta(1), epsilon(1). F(0) has three main subunits: a(1), b(2) and c(10-14). The alpha and beta chains form an alternating ring which encloses part of the gamma chain. F(1) is attached to F(0) by a central stalk formed by the gamma and epsilon chains, while a peripheral stalk is formed by the delta and b chains.

It localises to the cell membrane. In terms of biological role, f(1)F(0) ATP synthase produces ATP from ADP in the presence of a proton or sodium gradient. F-type ATPases consist of two structural domains, F(1) containing the extramembraneous catalytic core and F(0) containing the membrane proton channel, linked together by a central stalk and a peripheral stalk. During catalysis, ATP synthesis in the catalytic domain of F(1) is coupled via a rotary mechanism of the central stalk subunits to proton translocation. Functionally, this protein is part of the stalk that links CF(0) to CF(1). It either transmits conformational changes from CF(0) to CF(1) or is implicated in proton conduction. This chain is ATP synthase subunit delta, found in Bacillus pumilus (strain SAFR-032).